We begin with the raw amino-acid sequence, 726 residues long: Catalase-peroxidase (726 aa).

A disordered region spans residues 1–33 (MSTSDDIHNTTATGKCPFHQGGHDQSAGAGTTT). A cross-link (tryptophyl-tyrosyl-methioninium (Trp-Tyr) (with M-252)) is located at residues 105-226 (WHGAGTYRSI…LGATEMGLIY (122 aa)). Catalysis depends on His106, which acts as the Proton acceptor. The segment at residues 226–252 (YVNPEGPDHSGEPLSAAAAIRATFGNM) is a cross-link (tryptophyl-tyrosyl-methioninium (Tyr-Met) (with W-105)). Residue His267 participates in heme b binding.

It belongs to the peroxidase family. Peroxidase/catalase subfamily. In terms of assembly, homodimer or homotetramer. Heme b serves as cofactor. Post-translationally, formation of the three residue Trp-Tyr-Met cross-link is important for the catalase, but not the peroxidase activity of the enzyme.

The enzyme catalyses H2O2 + AH2 = A + 2 H2O. It catalyses the reaction 2 H2O2 = O2 + 2 H2O. Its function is as follows. Bifunctional enzyme with both catalase and broad-spectrum peroxidase activity. The sequence is that of Catalase-peroxidase from Shigella sonnei (strain Ss046).